The primary structure comprises 290 residues: Acetylglutamate kinase (290 aa).

Substrate contacts are provided by residues 65-66 (GG), R87, and N186.

It belongs to the acetylglutamate kinase family. ArgB subfamily.

It localises to the cytoplasm. It carries out the reaction N-acetyl-L-glutamate + ATP = N-acetyl-L-glutamyl 5-phosphate + ADP. It participates in amino-acid biosynthesis; L-arginine biosynthesis; N(2)-acetyl-L-ornithine from L-glutamate: step 2/4. Functionally, catalyzes the ATP-dependent phosphorylation of N-acetyl-L-glutamate. In Mycolicibacterium gilvum (strain PYR-GCK) (Mycobacterium gilvum (strain PYR-GCK)), this protein is Acetylglutamate kinase.